Reading from the N-terminus, the 586-residue chain is uncharacterized protein (586 aa).

2 disordered regions span residues Val-17–Glu-64 and His-80–Asn-123. Residues Pro-28–Thr-37 show a composition bias toward polar residues. Composition is skewed to low complexity over residues Ser-38–Ser-52 and His-80–Ser-91. The span at Gln-94 to Ile-110 shows a compositional bias: basic and acidic residues. Residues Met-112–Asn-123 show a composition bias toward gly residues. The next 12 helical transmembrane spans lie at Trp-151–Tyr-171, Trp-191–Leu-211, Leu-218–Thr-238, Phe-243–Ile-263, Leu-283–Val-303, Thr-317–Phe-337, Phe-375–Leu-395, Tyr-413–Leu-433, Leu-441–Ile-461, Met-466–Ile-486, Ile-513–Thr-533, and Ile-536–Leu-556.

This sequence belongs to the major facilitator superfamily. Feline leukemia virus subgroup C receptor (TC 2.A.1.28.1) family.

It is found in the membrane. This is an uncharacterized protein from Caenorhabditis elegans.